Here is a 178-residue protein sequence, read N- to C-terminus: uncharacterized protein (178 aa).

Disordered stretches follow at residues 89 to 115 (NEEQ…RLSI) and 136 to 178 (DMPT…EIKA). The segment covering 98 to 109 (ASHGSTSSATST) has biased composition (low complexity). The segment covering 167–178 (DSDEEEEEEIKA) has biased composition (acidic residues).

It localises to the cytoplasm. The protein resides in the nucleus. This is an uncharacterized protein from Schizosaccharomyces pombe (strain 972 / ATCC 24843) (Fission yeast).